A 225-amino-acid polypeptide reads, in one-letter code: Uracil-DNA glycosylase (225 aa).

Aspartate 65 (proton acceptor) is an active-site residue.

The protein belongs to the uracil-DNA glycosylase (UDG) superfamily. UNG family.

It localises to the cytoplasm. The enzyme catalyses Hydrolyzes single-stranded DNA or mismatched double-stranded DNA and polynucleotides, releasing free uracil.. Functionally, excises uracil residues from the DNA which can arise as a result of misincorporation of dUMP residues by DNA polymerase or due to deamination of cytosine. This is Uracil-DNA glycosylase from Anoxybacillus flavithermus (strain DSM 21510 / WK1).